Reading from the N-terminus, the 277-residue chain is MEMO1 family protein CTN_0605 (277 aa).

The protein belongs to the MEMO1 family.

This chain is MEMO1 family protein CTN_0605, found in Thermotoga neapolitana (strain ATCC 49049 / DSM 4359 / NBRC 107923 / NS-E).